Reading from the N-terminus, the 177-residue chain is Trafficking regulator of GLUT4 1 (177 aa).

The Cytoplasmic portion of the chain corresponds to 1–105; the sequence is MAHPVQSEFP…QDQEAPRDYL (105 aa). Phosphoserine is present on residues serine 48, serine 87, and serine 88. The disordered stretch occupies residues 71–92; that stretch reads EAPLPRSPSRASSRRASSIATT. Positions 72 to 88 are enriched in low complexity; sequence APLPRSPSRASSRRASS. An intramembrane region (helical) is located at residues 106–126; it reads ILAVVACFCPVWPLNLIPLII. The Cytoplasmic portion of the chain corresponds to 127–153; it reads SIMSRSSMQQGNVDGARRLGRLARLLS. A helical membrane pass occupies residues 154–174; it reads ITLIIMGIVIIMVAVTVNFTV. The Extracellular segment spans residues 175 to 177; that stretch reads QKK.

The protein belongs to the CD225/Dispanin family. In terms of assembly, interacts with SLC2A4; the interaction is required for proper SLC2A4 reacycling after insulin stimulation. In terms of tissue distribution, expressed at high levels in heart, mammary gland, adrenal gland, stomach, smooth muscle and skeletal muscle, and at lower levels in brain and lung. Strongly down-regulated in lung cancer tissues, due to hypermethylation of the corresponding locus. Expressed in adipose tissue.

The protein resides in the cell membrane. It is found in the endomembrane system. It localises to the cytoplasm. Its subcellular location is the perinuclear region. Its function is as follows. Regulates insulin-mediated adipose tissue glucose uptake and transport by modulation of SLC2A4 recycling. Not required for SLC2A4 membrane fusion upon an initial stimulus, but rather is necessary for proper protein recycling during prolonged insulin stimulation. This is Trafficking regulator of GLUT4 1 from Homo sapiens (Human).